Here is a 245-residue protein sequence, read N- to C-terminus: tRNA pseudouridine synthase A (245 aa).

Asp52 acts as the Nucleophile in catalysis. Tyr111 contributes to the substrate binding site.

Belongs to the tRNA pseudouridine synthase TruA family. As to quaternary structure, homodimer.

It carries out the reaction uridine(38/39/40) in tRNA = pseudouridine(38/39/40) in tRNA. Formation of pseudouridine at positions 38, 39 and 40 in the anticodon stem and loop of transfer RNAs. The polypeptide is tRNA pseudouridine synthase A (Thermotoga sp. (strain RQ2)).